A 520-amino-acid chain; its full sequence is MLNVPSQAFPAPGSQQRVASQGRSKVPLKQGRSLMDWFRLTKSGKDFTGLKGGLIEVTEEELKKHNKKDDCWICIRGFVYNVSPYMEYHPGGEDELMRAAGADGTDLFNEVHRWVNYESMLKECLVGRMAVKPAVPKDCHEGKRVLNGMLPKSQVTDTLPREGPSSPSYDWFQTESSVTIVIYTKQKNINLDSVIVDLQDDSLRAEAVIKDHSYLIHIGLSHEVQENFSVRVIENVGKIEIVLQKKETVSWKCLGDPLEKHDSFIPKKDTGLYYRQCQLISKEDVTHDTRLFCLMLPPSTHLQVPVGQHVYLKLSVTGAEIVKPYTPVSESLLSDFKEPVLSPNKYIYFLIKIYPAGLFTPELDRLQIGDFVSVSGPEGNFKVSKLQEVEDLFLLAAGTGFTPMVTVLNHALTHMSSLRKVKLMFFNKTEDDIIWRCQLEKLALKDKRFHVEYVLSAPSPEWNGKQGHVSRALLSEFLQRSLENSKVFLCICGPTPFTDEGIRLLHDLNFSDDEIHGFTA.

At Met-1 the chain carries N-acetylmethionine. The disordered stretch occupies residues 1–27 (MLNVPSQAFPAPGSQQRVASQGRSKVP). The span at 13-23 (GSQQRVASQGR) shows a compositional bias: polar residues. Residues 54–130 (LIEVTEEELK…LKECLVGRMA (77 aa)) enclose the Cytochrome b5 heme-binding domain. His-89 and His-112 together coordinate heme. One can recognise a CS domain in the interval 164 to 255 (PSSPSYDWFQ…KETVSWKCLG (92 aa)). The 113-residue stretch at 272–384 (LYYRQCQLIS…SGPEGNFKVS (113 aa)) folds into the FAD-binding FR-type domain. Residues 364-379 (DRLQ…GPEG) and 391-423 (DLFL…KVKL) each bind FAD.

The protein belongs to the flavoprotein pyridine nucleotide cytochrome reductase family. FAD serves as cofactor. Isoform 2 is expressed in testis, brain, skeletal muscle and in the male germline.

The protein localises to the endoplasmic reticulum. The enzyme catalyses 2 Fe(III)-[cytochrome b5] + NADH = 2 Fe(II)-[cytochrome b5] + NAD(+) + H(+). Its function is as follows. NADH-cytochrome b5 reductase involved in endoplasmic reticulum stress response pathway. Plays a critical role in protecting pancreatic beta-cells against oxidant stress, possibly by protecting the cell from excess buildup of reactive oxygen species (ROS). The polypeptide is Cytochrome b5 reductase 4 (Cyb5r4) (Rattus norvegicus (Rat)).